The following is an 84-amino-acid chain: Beta-defensin 119 (84 aa).

An N-terminal signal peptide occupies residues 1 to 21; the sequence is MKLLYLFLAILLAIEEPVISG. Cystine bridges form between Cys28–Cys55, Cys35–Cys49, and Cys39–Cys56.

Belongs to the beta-defensin family.

It localises to the secreted. Its function is as follows. Has antibacterial activity. This chain is Beta-defensin 119 (DEFB119), found in Hylobates lar (Lar gibbon).